The primary structure comprises 771 residues: U-box domain-containing protein 6 (771 aa).

In terms of domain architecture, U-box spans 274–348 (IPPEELRCPI…ASWCEQNGIT (75 aa)). The tract at residues 394 to 415 (EESSTIESERQQKEKNNAPDEV) is disordered. Residues 400 to 411 (ESERQQKEKNNA) are compositionally biased toward basic and acidic residues. 5 ARM repeats span residues 456–499 (EEAR…NLAV), 502–542 (NRNK…CLEK), 544–581 (KPVI…NLST), 583–622 (SPNI…NLAS), and 625–664 (EGKE…ILCT). The span at 706 to 722 (EQRHRDQPSPNKEEAPR) shows a compositional bias: basic and acidic residues. Residues 706 to 751 (EQRHRDQPSPNKEEAPRKTVSAPMAIPAPVSAPESEVKPLTKSISR) form a disordered region.

It carries out the reaction S-ubiquitinyl-[E2 ubiquitin-conjugating enzyme]-L-cysteine + [acceptor protein]-L-lysine = [E2 ubiquitin-conjugating enzyme]-L-cysteine + N(6)-ubiquitinyl-[acceptor protein]-L-lysine.. It functions in the pathway protein modification; protein ubiquitination. Its function is as follows. Functions as an E3 ubiquitin ligase. The chain is U-box domain-containing protein 6 (PUB6) from Arabidopsis thaliana (Mouse-ear cress).